Reading from the N-terminus, the 128-residue chain is Holo-[acyl-carrier-protein] synthase (128 aa).

Aspartate 8 and glutamate 57 together coordinate Mg(2+).

Belongs to the P-Pant transferase superfamily. AcpS family. Mg(2+) is required as a cofactor.

It is found in the cytoplasm. It carries out the reaction apo-[ACP] + CoA = holo-[ACP] + adenosine 3',5'-bisphosphate + H(+). Its function is as follows. Transfers the 4'-phosphopantetheine moiety from coenzyme A to a Ser of acyl-carrier-protein. This is Holo-[acyl-carrier-protein] synthase from Syntrophus aciditrophicus (strain SB).